The primary structure comprises 658 residues: Secretin XcpQ (658 aa).

The signal sequence occupies residues 1–34; the sequence is MSQPLLRALFAPSSRSYVPAVLLSLALGIQAAHA. The interval 51–141 is N0; the sequence is AHWTINLKDA…TEAGGGQSAP (91 aa). Residues 142–205 are N1; sequence DRLETRVIQV…DVIRQLDQKG (64 aa). An N2 region spans residues 206-279; the sequence is SHDYSVINLR…SLDTPTARSA (74 aa). Residues 280 to 365 form an N3 region; that stretch reads NTRVIRLRHN…VPRAQVLVEA (86 aa). Positions 302 to 322 are disordered; that stretch reads SEGMKNNGGQGGEQTGGGRPS. Positions 307–320 are enriched in gly residues; sequence NNGGQGGEQTGGGR. Residues 368–606 are secretin; that stretch reads VEISGDIQDA…VFLRPTVVRD (239 aa). A s domain region spans residues 608 to 658; the sequence is AGLAALSGKKYSDIRVIDGTRGPEGRPSILPTNANQLFDGQAVDLRELMTE.

This sequence belongs to the bacterial secretin family. GSP D subfamily. As to quaternary structure, forms a cylindrical channel with 15 subunits. The closed pentadecameric channel is 170 Angstroms long and 140 Angstroms in diameter.

Its subcellular location is the cell outer membrane. Its function is as follows. Involved in a type II secretion system (T2SS, formerly general secretion pathway, GSP) for the export of proteins. This subunit forms the outer membrane channel. Among its substrates are PrpL, elastase LasB, chitin binding protein D (CbpD), aminopeptidase PaAP, and metalloprotease ImpA. This Pseudomonas aeruginosa (strain ATCC 15692 / DSM 22644 / CIP 104116 / JCM 14847 / LMG 12228 / 1C / PRS 101 / PAO1) protein is Secretin XcpQ.